A 111-amino-acid polypeptide reads, in one-letter code: Natriuretic peptide TNP-b (111 aa).

The N-terminal stretch at 1–27 (MVGLSRLAGGGLLLLLLLALLPLALDG) is a signal peptide. Positions 28–71 (KPAPLPQALPEALAGGTTALRRDVTEEQQQQLVAEESSGPAAGR) are excised as a propeptide. Disordered regions lie at residues 51–77 (VTEE…PKIG) and 92–111 (SGLG…PGGS). An intrachain disulfide couples cysteine 80 to cysteine 96. A propeptide spanning residues 107-111 (IPGGS) is cleaved from the precursor.

It belongs to the natriuretic peptide family. As to expression, expressed by the venom gland.

It localises to the secreted. Snake venom natriuretic peptide that exhibits vasoactive and probable hypotensive activity. Is only weakly active on natriuretic peptide receptor-C (NPR3). The polypeptide is Natriuretic peptide TNP-b (Oxyuranus scutellatus scutellatus (Australian taipan)).